The primary structure comprises 376 residues: MLDLIQTRRDLHQIPEIGLEEFKTQAYLLDVIEKLTTGKDFVQIRTWRTGILVYLQGSQPERTIGWRTDIDGLPIVEQTGLPFASQHQGRMHACGHDFHMTIALGCLERALEEQPKNNLLFLFQPAEENEAGGMLMYEDGAFGDWLPNQFYGLHVRPDLKVGQIATNTHTLFAGTCEVKIRFKGKGGHAAFPHEANDALVAASYFVTQVQSVVSRNVNPIEGAVVTFGVFQAGTTNNVITDTAFLHGTIRALTQDMSLLVQKRVKTVAEGVAAAFDMEVEVELKQGGYLPVENNPALARELMDFFDEKDGIELIDIEPAMTGEDFGYLLSKVDGVMFWLGIDSPYALHHPQMSPKEEVLAIGVAAVSSFLKKKAAE.

The active site involves D69. E128 (proton acceptor) is an active-site residue.

This sequence belongs to the peptidase M20A family. N-acetyldiaminopimelate deacetylase subfamily.

It catalyses the reaction N-acetyl-(2S,6S)-2,6-diaminopimelate + H2O = (2S,6S)-2,6-diaminopimelate + acetate. It participates in amino-acid biosynthesis; L-lysine biosynthesis via DAP pathway; LL-2,6-diaminopimelate from (S)-tetrahydrodipicolinate (acetylase route): step 3/3. Catalyzes the conversion of N-acetyl-diaminopimelate to diaminopimelate and acetate. The polypeptide is N-acetyldiaminopimelate deacetylase (Streptococcus pneumoniae (strain 70585)).